Consider the following 681-residue polypeptide: Sodium/glucose cotransporter 4 (681 aa).

Residues 1-36 lie on the Extracellular side of the membrane; sequence MSKELAAMGPGASGDGVRTETAPHIALDSRVGLHAY. Residues 37 to 57 traverse the membrane as a helical segment; sequence DISVVVIYFVFVIAVGIWSSI. Residues 58-75 are Cytoplasmic-facing; that stretch reads RASRGTIGGYFLAGRSMS. A helical membrane pass occupies residues 76–98; the sequence is WWPIGASLMSSNVGSGLFIGLAG. At 99 to 114 the chain is on the extracellular side; the sequence is TGAAGGLAVGGFEWNA. The chain crosses the membrane as a helical span at residues 115–135; that stretch reads TWLLLALGWVFVPVYIAAGVV. The Cytoplasmic portion of the chain corresponds to 136–157; sequence TMPQYLKKRFGGQRIQVYMSVL. A helical transmembrane segment spans residues 158–178; that stretch reads SLILYIFTKISTDIFSGALFI. The Extracellular segment spans residues 179–190; the sequence is QMALGWNLYLST. A helical transmembrane segment spans residues 191–211; it reads GILLVVTAVYTIAGGLMAVIY. The Cytoplasmic segment spans residues 212 to 217; that stretch reads TDALQT. The chain crosses the membrane as a helical span at residues 218–238; it reads VIMVGGALVLMFLGFQDVGWY. Topologically, residues 239–275 are extracellular; that stretch reads PGLEQRYRQAIPNVTVPNTTCHLPRPDAFHILRDPVS. N-linked (GlcNAc...) asparagine glycosylation is present at Asn251. A helical membrane pass occupies residues 276–296; sequence GDIPWPGLIFGLTVLATWCWC. Residues 297-317 are Cytoplasmic-facing; that stretch reads TDQVIVQRSLSAKSLSHAKGG. A helical transmembrane segment spans residues 318–338; that stretch reads SVLGGYLKILPMFFIVMPGMI. Topologically, residues 339–383 are extracellular; sequence SRALFPDEVGCVDPDVCQRICGARVGCSNIAYPKLVMALMPVGLR. A helical transmembrane segment spans residues 384–406; it reads GLMIAVIMAALMSSLTSIFNSSS. Over 407–427 the chain is Cytoplasmic; it reads TLFTIDVWQRFRRKSTEQELM. The helical transmembrane segment at 428–448 threads the bilayer; it reads VVGRVFVVFLVVISILWIPII. Over 449-459 the chain is Extracellular; the sequence is QSSNSGQLFDY. Residues 460-480 form a helical membrane-spanning segment; the sequence is IQAVTSYLAPPITALFLLAIF. Topologically, residues 481–487 are cytoplasmic; the sequence is CKRVTEP. Residues 488–508 traverse the membrane as a helical segment; sequence GAFWGLVFGLGVGLLRMILEF. The Extracellular portion of the chain corresponds to 509–530; it reads SYPAPACGEVDRRPAVLKDFHY. Residues 531-551 traverse the membrane as a helical segment; the sequence is LYFAILLCGLTAIVIVIVSLC. At 552–660 the chain is on the cytoplasmic side; the sequence is TTPIPEEQLT…SIEEEPLWRH (109 aa). Basic and acidic residues predominate over residues 579-591; it reads AHESTPEISERPA. The segment at 579–614 is disordered; that stretch reads AHESTPEISERPAGECPAGGGAAENSSLGQEQPEAP. A phosphoserine mark is found at Ser604 and Ser605. A helical transmembrane segment spans residues 661-681; sequence VCNINAVLLLAINIFLWGYFA.

It belongs to the sodium:solute symporter (SSF) (TC 2.A.21) family. As to expression, expressed in the small intestine, kidney and liver.

The protein localises to the cell membrane. The enzyme catalyses D-mannose(out) + n Na(+)(out) = D-mannose(in) + n Na(+)(in). Electrogenic Na(+)-coupled sugar symporter that may play a primary role in D-mannose and possibly D-fructose and D-glucose transport at the plasma membrane. Transporter activity is driven by a transmembrane Na(+) electrochemical gradient set by the Na(+)/K(+) pump. Exclusively recognizes sugar substrates having a pyranose ring with an axial hydroxyl group on carbon 2. This is Sodium/glucose cotransporter 4 from Homo sapiens (Human).